The following is a 472-amino-acid chain: UDP-glucosyltransferase 103 (472 aa).

The active-site Proton acceptor is the His15. Position 15 (His15) interacts with an anthocyanidin. Catalysis depends on Asp117, which acts as the Charge relay. UDP-alpha-D-glucose is bound by residues Ala344, Gln346, His361, Trp364, Asn365, Ser366, and Glu369. Gly384 is a binding site for an anthocyanidin. Residues Glu385 and Gln386 each contribute to the UDP-alpha-D-glucose site.

This sequence belongs to the UDP-glycosyltransferase family.

It catalyses the reaction (20S)-ginsenoside F1 + UDP-alpha-D-glucose = (20S)-ginsenoside Rg1 + UDP + H(+). It functions in the pathway secondary metabolite biosynthesis; terpenoid biosynthesis. Functionally, probable component of the triterpene saponins (e.g. ginsenosides) biosynthetic pathway. No detectable activity toward protopanaxatriol (PPT). The polypeptide is UDP-glucosyltransferase 103 (Panax ginseng (Korean ginseng)).